Reading from the N-terminus, the 440-residue chain is Protein C-ets-1 (440 aa).

Residues K8 and K15 each carry the N6-acetyllysine; alternate modification. Glycyl lysine isopeptide (Lys-Gly) (interchain with G-Cter in SUMO2); alternate cross-links involve residues K8 and K15. K15 participates in a covalent cross-link: Glycyl lysine isopeptide (Lys-Gly) (interchain with G-Cter in SUMO); alternate. A Phosphothreonine; by MAPK modification is found at T38. The PNT domain occupies 51 to 136 (ATFSGFTKEQ…EHLEILQKED (86 aa)). The segment at 130–243 (EILQKEDVKP…DNMCLGRASR (114 aa)) is activation domain; required for transcription activation. Residue K138 forms a Glycyl lysine isopeptide (Lys-Gly) (interchain with G-Cter in SUMO2) linkage. A Phosphotyrosine modification is found at Y223. A Glycyl lysine isopeptide (Lys-Gly) (interchain with G-Cter in SUMO) cross-link involves residue K227. A Phosphoserine; by CaMK2 modification is found at S251. S254 carries the phosphoserine modification. T265 carries the phosphothreonine modification. Phosphoserine is present on residues S267 and S270. 2 positions are modified to phosphoserine; by CaMK2: S282 and S285. Residues 304-312 (FKDYVRDRA) are helix HI-1. At K305 the chain carries N6-acetyllysine. The segment at 323 to 330 (AAALAGYT) is helix HI-2. Residues 335 to 415 (IQLWQFLLEL…AGKRYVYRFV (81 aa)) constitute a DNA-binding region (ETS). The tract at residues 418-422 (LQSLL) is helix H4. A helix H5 region spans residues 426–432 (PEELHAM).

The protein belongs to the ETS family. As to quaternary structure, binds DNA as a homodimer; homodimerization is required for transcription activation. Interacts with MAF and MAFB. Interacts with PAX5; the interaction alters DNA-binding properties. Interacts with DAXX. Interacts with UBE2I. Interacts with SP100; the interaction is direct and modulates ETS1 transcriptional activity. Phosphorylation at Ser-251, Ser-282 and Ser-285 by CaMK2/CaMKII in response to calcium signaling decreases affinity for DNA: an increasing number of phosphoserines causes DNA-binding to become progressively weaker. In terms of processing, sumoylated on Lys-15 and Lys-227, preferentially with SUMO2; which inhibits transcriptional activity. Post-translationally, ubiquitinated; which induces proteasomal degradation.

Its subcellular location is the nucleus. The protein localises to the cytoplasm. With respect to regulation, autoinhibited by a module composed of four alpha helices (HI-1, HI-2, H4, and H5) that flank the DNA-binding ETS domain, reducing the affinity for DNA. Phosphorylation by CaMK2/CaMKII in response to calcium signaling decreases affinity for DNA. Transcription factor. Directly controls the expression of cytokine and chemokine genes in a wide variety of different cellular contexts. May control the differentiation, survival and proliferation of lymphoid cells. May also regulate angiogenesis through regulation of expression of genes controlling endothelial cell migration and invasion. The sequence is that of Protein C-ets-1 (Ets1) from Mus musculus (Mouse).